The primary structure comprises 683 residues: Long-chain-fatty-acid--CoA ligase 5 (683 aa).

Residues 12 to 32 (LPTPALICLLTFGTAIFLWLI) form a helical; Signal-anchor for type III membrane protein membrane-spanning segment. At 33 to 683 (NRPQPVLPLI…IKSLYESIEE (651 aa)) the chain is on the cytoplasmic side. Lys-361 carries the post-translational modification N6-acetyllysine.

This sequence belongs to the ATP-dependent AMP-binding enzyme family.

It localises to the mitochondrion. Its subcellular location is the endoplasmic reticulum. The protein localises to the mitochondrion outer membrane. The protein resides in the endoplasmic reticulum membrane. It is found in the cell membrane. It carries out the reaction a long-chain fatty acid + ATP + CoA = a long-chain fatty acyl-CoA + AMP + diphosphate. It catalyses the reaction (5Z,8Z,11Z,14Z)-eicosatetraenoate + ATP + CoA = (5Z,8Z,11Z,14Z)-eicosatetraenoyl-CoA + AMP + diphosphate. The catalysed reaction is hexadecanoate + ATP + CoA = hexadecanoyl-CoA + AMP + diphosphate. The enzyme catalyses (E)-hexadec-2-enoate + ATP + CoA = (2E)-hexadecenoyl-CoA + AMP + diphosphate. It carries out the reaction 15-hydroxy-(5Z,8Z,11Z,13E)-eicosatetraenoate + ATP + CoA = 15-hydroxy-(5Z,8Z,11Z,13E)-eicosatetraenoyl-CoA + AMP + diphosphate. It catalyses the reaction 12-hydroxy-(5Z,8Z,10E,14Z)-eicosatetraenoate + ATP + CoA = 12-hydroxy-(5Z,8Z,10E,14Z)-eicosatetraenoyl-CoA + AMP + diphosphate. The catalysed reaction is 5-hydroxy-(6E,8Z,11Z,14Z)-eicosatetraenoate + ATP + CoA = 5-hydroxy-(6E,8Z,11Z,14Z)-eicosatetraenoyl-CoA + AMP + diphosphate. The enzyme catalyses 14,15-epoxy-(5Z,8Z,11Z)-eicosatrienoate + ATP + CoA = 14,15-epoxy-(5Z,8Z,11Z)-eicosatrienoyl-CoA + AMP + diphosphate. It carries out the reaction 11,12-epoxy-(5Z,8Z,14Z)-eicosatrienoate + ATP + CoA = 11,12-epoxy-(5Z,8Z,14Z)-eicosatrienoyl-CoA + AMP + diphosphate. It catalyses the reaction (9Z)-octadecenoate + ATP + CoA = (9Z)-octadecenoyl-CoA + AMP + diphosphate. Functionally, catalyzes the conversion of long-chain fatty acids to their active form acyl-CoAs for both synthesis of cellular lipids, and degradation via beta-oxidation. ACSL5 may activate fatty acids from exogenous sources for the synthesis of triacylglycerol destined for intracellular storage. It was suggested that it may also stimulate fatty acid oxidation. At the villus tip of the crypt-villus axis of the small intestine may sensitize epithelial cells to apoptosis specifically triggered by the death ligand TRAIL. May have a role in the survival of glioma cells. Utilizes a wide range of saturated fatty acids with a preference for C16-C18 unsaturated fatty acids. The polypeptide is Long-chain-fatty-acid--CoA ligase 5 (Mus musculus (Mouse)).